Reading from the N-terminus, the 507-residue chain is Histidine ammonia-lyase (507 aa).

The segment at residues 141–143 (ASG) is a cross-link (5-imidazolinone (Ala-Gly)). S142 is subject to 2,3-didehydroalanine (Ser).

Belongs to the PAL/histidase family. Post-translationally, contains an active site 4-methylidene-imidazol-5-one (MIO), which is formed autocatalytically by cyclization and dehydration of residues Ala-Ser-Gly.

Its subcellular location is the cytoplasm. The enzyme catalyses L-histidine = trans-urocanate + NH4(+). It functions in the pathway amino-acid degradation; L-histidine degradation into L-glutamate; N-formimidoyl-L-glutamate from L-histidine: step 1/3. This chain is Histidine ammonia-lyase, found in Burkholderia pseudomallei (strain 668).